The following is a 471-amino-acid chain: Glutamate--tRNA ligase 1 (471 aa).

The 'HIGH' region signature appears at 15 to 25 (PSPTGYLHIGG). The short motif at 243 to 247 (KLSKR) is the 'KMSKS' region element. Lys-246 contributes to the ATP binding site.

It belongs to the class-I aminoacyl-tRNA synthetase family. Glutamate--tRNA ligase type 1 subfamily. In terms of assembly, monomer.

The protein localises to the cytoplasm. The enzyme catalyses tRNA(Glu) + L-glutamate + ATP = L-glutamyl-tRNA(Glu) + AMP + diphosphate. Catalyzes the attachment of glutamate to tRNA(Glu) in a two-step reaction: glutamate is first activated by ATP to form Glu-AMP and then transferred to the acceptor end of tRNA(Glu). The polypeptide is Glutamate--tRNA ligase 1 (Cereibacter sphaeroides (strain ATCC 17029 / ATH 2.4.9) (Rhodobacter sphaeroides)).